Consider the following 367-residue polypeptide: Mitochondrial GTPase 1 (367 aa).

Residues Leu-42 to Pro-228 form the CP-type G domain. GTP contacts are provided by residues Thr-89 to Asp-92, Asn-160 to Thr-165, and Gly-224.

It belongs to the TRAFAC class YlqF/YawG GTPase family. MTG1 subfamily.

The protein resides in the mitochondrion inner membrane. Its function is as follows. Mitochondrial GTPase involved in assembly of the large ribosomal subunit. Plays a role in expression of the mitochondrial translational machinery. This Saccharomyces cerevisiae (strain ATCC 204508 / S288c) (Baker's yeast) protein is Mitochondrial GTPase 1 (MTG1).